The primary structure comprises 330 residues: Tyrosine-protein phosphatase yvh1 (330 aa).

The Tyrosine-protein phosphatase domain maps to 45 to 187 (NDLSEISKNL…LRVYFECNYQ (143 aa)). The Phosphocysteine intermediate role is filled by C131.

This sequence belongs to the protein-tyrosine phosphatase family. Non-receptor class dual specificity subfamily.

It is found in the cytoplasm. The protein localises to the nucleus. The enzyme catalyses O-phospho-L-tyrosyl-[protein] + H2O = L-tyrosyl-[protein] + phosphate. Its function is as follows. May be directly involved in signal transduction and/or cell cycle regulation. It is necessary for maintaining growth rate or spore germination. Could show both activity toward tyrosine-protein phosphate as well as with serine-protein phosphate. This is Tyrosine-protein phosphatase yvh1 (yvh1) from Schizosaccharomyces pombe (strain 972 / ATCC 24843) (Fission yeast).